A 173-amino-acid chain; its full sequence is Translation initiation factor IF-3 (173 aa).

It belongs to the IF-3 family. In terms of assembly, monomer.

The protein resides in the cytoplasm. Functionally, IF-3 binds to the 30S ribosomal subunit and shifts the equilibrium between 70S ribosomes and their 50S and 30S subunits in favor of the free subunits, thus enhancing the availability of 30S subunits on which protein synthesis initiation begins. In Caulobacter vibrioides (strain ATCC 19089 / CIP 103742 / CB 15) (Caulobacter crescentus), this protein is Translation initiation factor IF-3.